A 263-amino-acid polypeptide reads, in one-letter code: Small ribosomal subunit protein eS4 (263 aa).

The S4 RNA-binding domain maps to Leu-42 to Asp-104.

This sequence belongs to the eukaryotic ribosomal protein eS4 family. In terms of assembly, component of the small ribosomal subunit.

It is found in the cytoplasm. Its function is as follows. Component of the small ribosomal subunit. The ribosome is a large ribonucleoprotein complex responsible for the synthesis of proteins in the cell. This Xenopus laevis (African clawed frog) protein is Small ribosomal subunit protein eS4 (rps4).